We begin with the raw amino-acid sequence, 334 residues long: Mitochondrial ribosome-associated GTPase 1 (334 aa).

The CP-type G domain occupies 36-209 (AKGLKKMQSS…LLDTPGVLAP (174 aa)). Residues 83–86 (NKMD), 153–158 (NVGKSS), and G205 each bind GTP.

Belongs to the TRAFAC class YlqF/YawG GTPase family. MTG1 subfamily. In terms of assembly, associates with the mitochondrial ribosome large subunit; the association occurs in a GTP-dependent manner.

The protein localises to the mitochondrion inner membrane. Its function is as follows. Plays a role in the regulation of the mitochondrial ribosome assembly and of translational activity. Displays mitochondrial GTPase activity. The polypeptide is Mitochondrial ribosome-associated GTPase 1 (MTG1) (Homo sapiens (Human)).